Reading from the N-terminus, the 1903-residue chain is Plexin-A4 (1903 aa).

The N-terminal stretch at 1-26 is a signal peptide; the sequence is MAFHNRRWNFTFSCCVVVLLLPLVAA. In terms of domain architecture, Sema spans 27-515; sequence RPQQPSAATR…SESQLTRVPV (489 aa). The Extracellular segment spans residues 27–1246; the sequence is RPQQPSAATR…ITSDSPLSST (1220 aa). 2 disulfides stabilise this stretch: Cys97–Cys106 and Cys132–Cys140. Asn166 carries an N-linked (GlcNAc...) asparagine glycan. 3 disulfides stabilise this stretch: Cys291–Cys413, Cys307–Cys364, and Cys382–Cys401. A glycan (N-linked (GlcNAc...) asparagine) is linked at Asn450. The region spanning 517 to 567 is the PSI 1 domain; sequence ACEQYSSCNECLGSGDPHCGWCVLHSMCTRKEKCERSSEPRRFASNIKQCV. Cystine bridges form between Cys518–Cys535, Cys524–Cys566, Cys527–Cys544, and Cys538–Cys550. Asn575 and Asn600 each carry an N-linked (GlcNAc...) asparagine glycan. A disulfide bridge links Cys601 with Cys620. N-linked (GlcNAc...) asparagine glycosylation is found at Asn656, Asn663, Asn764, and Asn772. Residues 663 to 710 enclose the PSI 2 domain; it reads NCSVHKSCLSCVGSPYQCHWCKYRHTCTHDPSSCSFQEGRVKQPEECP. One can recognise a PSI 3 domain in the interval 811-864; that stretch reads KCDARRESCGLCLKADPLFGCVWCKGENRCSLKQHCSYPQSMWLEHNGINSKCT. IPT/TIG domains lie at 866–960, 962–1046, 1049–1148, and 1151–1246; these read PRIT…YYFV, PQLL…FEYV, PTIT…FVYY, and PVFE…LSST. N-linked (GlcNAc...) asparagine glycans are attached at residues Asn981, Asn992, Asn1025, Asn1141, Asn1189, and Asn1214. A helical membrane pass occupies residues 1247–1267; sequence AVISIAGAGGLLIFFIVIVLI. Residues 1268-1903 lie on the Cytoplasmic side of the membrane; sequence AYKRKSRESD…QVVAFMSLES (636 aa).

Belongs to the plexin family.

The protein localises to the cell membrane. Involved in the development of primary sensory neurons especially in branching of the peripheral axons. Interacts with the SLIT2 signaling specifically to promote axonal branching of Rohon-Beard neurons and the trigeminal sensory ganglion neurons. The protein is Plexin-A4 (plxna4) of Danio rerio (Zebrafish).